Consider the following 209-residue polypeptide: Large ribosomal subunit protein uL3 (209 aa).

The disordered stretch occupies residues 121-154; it reads GGIKRHNFHRGPMAHGSKYHRRPGSSAAKGPART.

It belongs to the universal ribosomal protein uL3 family. As to quaternary structure, part of the 50S ribosomal subunit. Forms a cluster with proteins L14 and L19.

One of the primary rRNA binding proteins, it binds directly near the 3'-end of the 23S rRNA, where it nucleates assembly of the 50S subunit. The sequence is that of Large ribosomal subunit protein uL3 from Desulforamulus reducens (strain ATCC BAA-1160 / DSM 100696 / MI-1) (Desulfotomaculum reducens).